A 436-amino-acid chain; its full sequence is Adenylosuccinate synthetase (436 aa).

GTP-binding positions include 12–18 (GDEGKGK) and 40–42 (GHT). The Proton acceptor role is filled by Asp-13. Mg(2+) contacts are provided by Asp-13 and Gly-40. IMP contacts are provided by residues 13–16 (DEGK), 38–41 (NAGH), Thr-128, Arg-142, Gln-223, Thr-238, and Arg-302. His-41 functions as the Proton donor in the catalytic mechanism. 298 to 304 (TTTGRRR) contacts substrate. Residues Arg-304, 330-332 (KLD), and 412-414 (SLG) each bind GTP.

The protein belongs to the adenylosuccinate synthetase family. In terms of assembly, homodimer. Mg(2+) serves as cofactor.

It is found in the cytoplasm. It carries out the reaction IMP + L-aspartate + GTP = N(6)-(1,2-dicarboxyethyl)-AMP + GDP + phosphate + 2 H(+). It participates in purine metabolism; AMP biosynthesis via de novo pathway; AMP from IMP: step 1/2. In terms of biological role, plays an important role in the de novo pathway of purine nucleotide biosynthesis. Catalyzes the first committed step in the biosynthesis of AMP from IMP. This is Adenylosuccinate synthetase from Prochlorococcus marinus (strain AS9601).